Reading from the N-terminus, the 643-residue chain is tRNA 5-methylaminomethyl-2-thiouridine biosynthesis bifunctional protein MnmC (643 aa).

The interval 1 to 223 (MPDRLVSATL…VDDRLVGDYA (223 aa)) is tRNA (mnm(5)s(2)U34)-methyltransferase. Positions 247-643 (IGAGLAGCAV…LRARRVGSAG (397 aa)) are FAD-dependent cmnm(5)s(2)U34 oxidoreductase.

The protein in the N-terminal section; belongs to the methyltransferase superfamily. tRNA (mnm(5)s(2)U34)-methyltransferase family. In the C-terminal section; belongs to the DAO family. FAD is required as a cofactor.

The protein resides in the cytoplasm. The catalysed reaction is 5-aminomethyl-2-thiouridine(34) in tRNA + S-adenosyl-L-methionine = 5-methylaminomethyl-2-thiouridine(34) in tRNA + S-adenosyl-L-homocysteine + H(+). Functionally, catalyzes the last two steps in the biosynthesis of 5-methylaminomethyl-2-thiouridine (mnm(5)s(2)U) at the wobble position (U34) in tRNA. Catalyzes the FAD-dependent demodification of cmnm(5)s(2)U34 to nm(5)s(2)U34, followed by the transfer of a methyl group from S-adenosyl-L-methionine to nm(5)s(2)U34, to form mnm(5)s(2)U34. The sequence is that of tRNA 5-methylaminomethyl-2-thiouridine biosynthesis bifunctional protein MnmC from Burkholderia orbicola (strain AU 1054).